We begin with the raw amino-acid sequence, 411 residues long: G1/S-specific cyclin pas1 (411 aa).

2 disordered regions span residues 210 to 253 and 307 to 326; these read LKNQ…PSVL and SLSK…VGVY. Residues 218–252 show a composition bias toward low complexity; sequence PSSSPQTTQDSSPILTMAPSTPVSVGSTPPSTPSV.

The protein belongs to the cyclin family.

In terms of biological role, essential for the control of the cell cycle at the G1/S (start) transition. Interacts with the pef1 protein kinase. The pef1/pas1 complex activates the res2/cdc10 complex. The sequence is that of G1/S-specific cyclin pas1 (pas1) from Schizosaccharomyces pombe (strain 972 / ATCC 24843) (Fission yeast).